The sequence spans 141 residues: MILGIGNDLVDVRRIERTIERFGDRFLDRVFTEAERRRAERRSAAGPHSPRAATYAKRFAAKEACAKALGTGLNKGVYWRDMGVVNLPGGRPTLALTGGALERLRQITPPGMVAEIHLTLTDELPIAQAIVLISAVPAPQP.

Mg(2+) contacts are provided by aspartate 8 and glutamate 63.

It belongs to the P-Pant transferase superfamily. AcpS family. It depends on Mg(2+) as a cofactor.

The protein localises to the cytoplasm. It carries out the reaction apo-[ACP] + CoA = holo-[ACP] + adenosine 3',5'-bisphosphate + H(+). Its function is as follows. Transfers the 4'-phosphopantetheine moiety from coenzyme A to a Ser of acyl-carrier-protein. The chain is Holo-[acyl-carrier-protein] synthase from Rhodospirillum centenum (strain ATCC 51521 / SW).